We begin with the raw amino-acid sequence, 198 residues long: Synaptobrevin homolog YKT6-A (198 aa).

Residues 8–127 (VLYKGENKVH…IQYNALDSYL (120 aa)) enclose the Longin domain. The v-SNARE coiled-coil homology domain occupies 138 to 198 (PMSKVQAELD…RKQNSCCDIM (61 aa)). Cys194 carries S-palmitoyl cysteine lipidation. Cys195 carries the cysteine methyl ester modification. Residue Cys195 is the site of S-farnesyl cysteine attachment. The propeptide at 196–198 (DIM) is removed in mature form.

The protein belongs to the synaptobrevin family. In terms of processing, palmitoylated; catalyzes its own palmitoylation. Palmitoylation is required for Golgi targeting. Post-translationally, farnesylation is required for Golgi targeting.

It localises to the cytoplasm. It is found in the cytosol. Its subcellular location is the cytoplasmic vesicle membrane. The protein localises to the golgi apparatus membrane. Functionally, vesicular soluble NSF attachment protein receptor (v-SNARE) mediating vesicle docking and fusion to a specific acceptor cellular compartment. Functions in endoplasmic reticulum to Golgi transport; as part of a SNARE complex composed of GOSR1, GOSR2 and STX5. Functions in early/recycling endosome to TGN transport; as part of a SNARE complex composed of BET1L, GOSR1 and STX5. Has a S-palmitoyl transferase activity. This Xenopus laevis (African clawed frog) protein is Synaptobrevin homolog YKT6-A (ykt6-a).